A 144-amino-acid chain; its full sequence is Nucleoside diphosphate kinase (144 aa).

Residues K9, F57, R85, T91, R102, and N112 each contribute to the ATP site. Residue H120 is the Pros-phosphohistidine intermediate of the active site.

This sequence belongs to the NDK family. In terms of assembly, homotetramer. Mg(2+) is required as a cofactor.

The protein resides in the cytoplasm. It catalyses the reaction a 2'-deoxyribonucleoside 5'-diphosphate + ATP = a 2'-deoxyribonucleoside 5'-triphosphate + ADP. It carries out the reaction a ribonucleoside 5'-diphosphate + ATP = a ribonucleoside 5'-triphosphate + ADP. Major role in the synthesis of nucleoside triphosphates other than ATP. The ATP gamma phosphate is transferred to the NDP beta phosphate via a ping-pong mechanism, using a phosphorylated active-site intermediate. The sequence is that of Nucleoside diphosphate kinase from Streptococcus uberis (strain ATCC BAA-854 / 0140J).